A 254-amino-acid chain; its full sequence is 3-deoxy-manno-octulosonate cytidylyltransferase (254 aa).

The protein belongs to the KdsB family.

It is found in the cytoplasm. The catalysed reaction is 3-deoxy-alpha-D-manno-oct-2-ulosonate + CTP = CMP-3-deoxy-beta-D-manno-octulosonate + diphosphate. It functions in the pathway nucleotide-sugar biosynthesis; CMP-3-deoxy-D-manno-octulosonate biosynthesis; CMP-3-deoxy-D-manno-octulosonate from 3-deoxy-D-manno-octulosonate and CTP: step 1/1. Its pathway is bacterial outer membrane biogenesis; lipopolysaccharide biosynthesis. Its function is as follows. Activates KDO (a required 8-carbon sugar) for incorporation into bacterial lipopolysaccharide in Gram-negative bacteria. This chain is 3-deoxy-manno-octulosonate cytidylyltransferase, found in Polynucleobacter necessarius subsp. necessarius (strain STIR1).